The sequence spans 560 residues: Protein DA1-related 7 (560 aa).

3 UIM domains span residues 43–62 (SEADQIEWAIQDSFNPQETS), 92–111 (EEDQQLSKIVEESLKEKGKS), and 155–174 (NEDAQLQKVIWESAKGKGQI). Residues 199 to 269 (SICDGCKSAI…HVCKKKFPGR (71 aa)) enclose the LIM zinc-binding domain.

Interacts with ubiquitin.

Functionally, ubiquitin receptor that probably regulates developmental process. This Arabidopsis thaliana (Mouse-ear cress) protein is Protein DA1-related 7 (DAR7).